A 429-amino-acid polypeptide reads, in one-letter code: Serine carboxypeptidase-like (429 aa).

Intrachain disulfides connect C58/C298, C226/C241, and C264/C269. Residue N76 is glycosylated (N-linked (GlcNAc...) asparagine). S148 is a catalytic residue. D336 is an active-site residue. A substrate-binding site is contributed by C339. The active site involves H393. 2 N-linked (GlcNAc...) asparagine glycosylation sites follow: N414 and N417.

This sequence belongs to the peptidase S10 family. Abundant in germinated embryos composed of leaf, root, and scutellum.

The polypeptide is Serine carboxypeptidase-like (CBP31) (Oryza sativa subsp. japonica (Rice)).